The following is a 248-amino-acid chain: Probable phosphatase VFMJ11_A0091 (248 aa).

Histidine 8, histidine 10, histidine 16, histidine 41, glutamate 74, histidine 102, histidine 132, aspartate 194, and histidine 196 together coordinate Zn(2+).

It belongs to the PHP family. Zn(2+) serves as cofactor.

This is Probable phosphatase VFMJ11_A0091 from Aliivibrio fischeri (strain MJ11) (Vibrio fischeri).